An 885-amino-acid polypeptide reads, in one-letter code: Alanine--tRNA ligase (885 aa).

Zn(2+) is bound by residues H571, H575, C674, and H678.

It belongs to the class-II aminoacyl-tRNA synthetase family. It depends on Zn(2+) as a cofactor.

The protein localises to the cytoplasm. The enzyme catalyses tRNA(Ala) + L-alanine + ATP = L-alanyl-tRNA(Ala) + AMP + diphosphate. Functionally, catalyzes the attachment of alanine to tRNA(Ala) in a two-step reaction: alanine is first activated by ATP to form Ala-AMP and then transferred to the acceptor end of tRNA(Ala). Also edits incorrectly charged Ser-tRNA(Ala) and Gly-tRNA(Ala) via its editing domain. This chain is Alanine--tRNA ligase, found in Clavibacter sepedonicus (Clavibacter michiganensis subsp. sepedonicus).